Here is a 319-residue protein sequence, read N- to C-terminus: Acetyl-coenzyme A carboxylase carboxyl transferase subunit alpha (319 aa).

The CoA carboxyltransferase C-terminal domain occupies 35–296 (NIDEEVHRLR…KAQLLADLAD (262 aa)).

Belongs to the AccA family. In terms of assembly, acetyl-CoA carboxylase is a heterohexamer composed of biotin carboxyl carrier protein (AccB), biotin carboxylase (AccC) and two subunits each of ACCase subunit alpha (AccA) and ACCase subunit beta (AccD).

It localises to the cytoplasm. It carries out the reaction N(6)-carboxybiotinyl-L-lysyl-[protein] + acetyl-CoA = N(6)-biotinyl-L-lysyl-[protein] + malonyl-CoA. It functions in the pathway lipid metabolism; malonyl-CoA biosynthesis; malonyl-CoA from acetyl-CoA: step 1/1. Its function is as follows. Component of the acetyl coenzyme A carboxylase (ACC) complex. First, biotin carboxylase catalyzes the carboxylation of biotin on its carrier protein (BCCP) and then the CO(2) group is transferred by the carboxyltransferase to acetyl-CoA to form malonyl-CoA. The chain is Acetyl-coenzyme A carboxylase carboxyl transferase subunit alpha from Escherichia coli O127:H6 (strain E2348/69 / EPEC).